We begin with the raw amino-acid sequence, 84 residues long: Alpha-mammal toxin Ts2 (84 aa).

Residues 1 to 20 (MKGFLLFISILMMIGTIVVG) form the signal peptide. The 63-residue stretch at 21–83 (KEGYAMDHEG…VWDYATNKCG (63 aa)) folds into the LCN-type CS-alpha/beta domain. Cystine bridges form between C31–C82, C35–C58, C43–C63, and C47–C65. Residue C82 is modified to Cysteine amide.

Belongs to the long (4 C-C) scorpion toxin superfamily. Sodium channel inhibitor family. Beta subfamily. Expressed by the venom gland.

Its subcellular location is the secreted. In terms of biological role, alpha toxins bind voltage-independently at site-3 of sodium channels (Nav) and inhibit the inactivation of the activated channels, thereby blocking neuronal transmission. This toxin acts on Nav1.2/SCN2A, Nav1.3/SCN3A, Nav1.5/SCN5A, Nav1.6/SCN8A and Nav1.7/SCN9A voltage-gated sodium channels, with the highest affinity for Nav1.3/SCN3A, followed by Nav1.6/SCN8A and Nav1.7/SCN9A which are affected almost equally. Interestingly, shows a significant shift of the voltage dependence of activation for Nav1.3/SCN3A that is characteristic of beta-toxins. In addition, in presence of LPS, this toxin inhibits the release of NO, IL-6 and TNF-alpha in J774.1 cells. Further, in the absence of LPS, it stimulates the production of the anti-inflammatory cytokine IL-10. This toxin is active on mammals. This chain is Alpha-mammal toxin Ts2, found in Tityus serrulatus (Brazilian scorpion).